The following is a 33-amino-acid chain: Photosystem II reaction center protein Psb30 (33 aa).

A helical transmembrane segment spans residues 5-25; the sequence is VIAQLIALALIVGSGPLVIAL.

This sequence belongs to the Psb30/Ycf12 family. PSII is composed of 1 copy each of membrane proteins PsbA, PsbB, PsbC, PsbD, PsbE, PsbF, PsbH, PsbI, PsbJ, PsbK, PsbL, PsbM, PsbT, PsbX, PsbY, PsbZ, Psb30/Ycf12, peripheral proteins of the oxygen-evolving complex and a large number of cofactors. It forms dimeric complexes.

Its subcellular location is the plastid. The protein localises to the chloroplast thylakoid membrane. In terms of biological role, a core subunit of photosystem II (PSII), probably helps stabilize the reaction center. In Physcomitrium patens (Spreading-leaved earth moss), this protein is Photosystem II reaction center protein Psb30.